The following is a 142-amino-acid chain: Large ribosomal subunit protein uL13 (142 aa).

It belongs to the universal ribosomal protein uL13 family. Part of the 50S ribosomal subunit.

This protein is one of the early assembly proteins of the 50S ribosomal subunit, although it is not seen to bind rRNA by itself. It is important during the early stages of 50S assembly. The polypeptide is Large ribosomal subunit protein uL13 (Coxiella burnetii (strain CbuG_Q212) (Coxiella burnetii (strain Q212))).